A 326-amino-acid polypeptide reads, in one-letter code: Undecaprenyl-phosphate 4-deoxy-4-formamido-L-arabinose transferase (326 aa).

At 1 to 235 (MFEIHPIKKV…TCLTTTPLRM (235 aa)) the chain is on the cytoplasmic side. A helical membrane pass occupies residues 236 to 256 (LSLLGSIIATSGFSLAILLVV). Residues 257-269 (LRLAFGSQWSGEG) lie on the Periplasmic side of the membrane. A helical membrane pass occupies residues 270–290 (VFMLFAVLFTFIGAQFIGMGL). Over 291–326 (LGEYIGRIYNDVRARPRYFVQKVIRPASSIDIEENH) the chain is Cytoplasmic.

This sequence belongs to the glycosyltransferase 2 family.

Its subcellular location is the cell inner membrane. The enzyme catalyses UDP-4-deoxy-4-formamido-beta-L-arabinose + di-trans,octa-cis-undecaprenyl phosphate = 4-deoxy-4-formamido-alpha-L-arabinopyranosyl di-trans,octa-cis-undecaprenyl phosphate + UDP. It functions in the pathway glycolipid biosynthesis; 4-amino-4-deoxy-alpha-L-arabinose undecaprenyl phosphate biosynthesis; 4-amino-4-deoxy-alpha-L-arabinose undecaprenyl phosphate from UDP-4-deoxy-4-formamido-beta-L-arabinose and undecaprenyl phosphate: step 1/2. It participates in bacterial outer membrane biogenesis; lipopolysaccharide biosynthesis. Catalyzes the transfer of 4-deoxy-4-formamido-L-arabinose from UDP to undecaprenyl phosphate. The modified arabinose is attached to lipid A and is required for resistance to polymyxin and cationic antimicrobial peptides. The protein is Undecaprenyl-phosphate 4-deoxy-4-formamido-L-arabinose transferase of Escherichia fergusonii (strain ATCC 35469 / DSM 13698 / CCUG 18766 / IAM 14443 / JCM 21226 / LMG 7866 / NBRC 102419 / NCTC 12128 / CDC 0568-73).